A 386-amino-acid chain; its full sequence is Alpha-D-kanosaminyltransferase (386 aa).

This sequence belongs to the glycosyltransferase group 1 family.

The catalysed reaction is 2'-deamino-2'-hydroxyneamine + UDP-alpha-D-kanosamine = kanamycin A + UDP + H(+). It catalyses the reaction neamine + UDP-alpha-D-kanosamine = kanamycin B + UDP + H(+). The enzyme catalyses paromamine + UDP-alpha-D-kanosamine = kanamycin C + UDP + H(+). It carries out the reaction 2'-deamino-2'-hydroxyparomamine + UDP-alpha-D-kanosamine = kanamycin X + UDP + H(+). It functions in the pathway antibiotic biosynthesis; kanamycin biosynthesis. Glycosyltransferase involved in the biosynthesis of kanamycins by catalyzing the transfer of the hexose kanosamine from UDP-alpha-D-kanosamine to disaccharide precursors. Can also use UDP-alpha-D-glucose as sugar donor with much lower efficiency. This Streptomyces kanamyceticus protein is Alpha-D-kanosaminyltransferase (kanE).